We begin with the raw amino-acid sequence, 147 residues long: 3-dehydroquinate dehydratase (147 aa).

The active-site Proton acceptor is the tyrosine 22. Substrate is bound by residues asparagine 73, histidine 79, and aspartate 86. Residue histidine 99 is the Proton donor of the active site. Residues 100–101 (LS) and arginine 110 each bind substrate.

This sequence belongs to the type-II 3-dehydroquinase family. As to quaternary structure, homododecamer.

The enzyme catalyses 3-dehydroquinate = 3-dehydroshikimate + H2O. The protein operates within metabolic intermediate biosynthesis; chorismate biosynthesis; chorismate from D-erythrose 4-phosphate and phosphoenolpyruvate: step 3/7. In terms of biological role, catalyzes a trans-dehydration via an enolate intermediate. This Synechococcus sp. (strain WH7803) protein is 3-dehydroquinate dehydratase.